The following is a 94-amino-acid chain: Co-chaperonin GroES (94 aa).

This sequence belongs to the GroES chaperonin family. As to quaternary structure, heptamer of 7 subunits arranged in a ring. Interacts with the chaperonin GroEL.

The protein resides in the cytoplasm. Its function is as follows. Together with the chaperonin GroEL, plays an essential role in assisting protein folding. The GroEL-GroES system forms a nano-cage that allows encapsulation of the non-native substrate proteins and provides a physical environment optimized to promote and accelerate protein folding. GroES binds to the apical surface of the GroEL ring, thereby capping the opening of the GroEL channel. The chain is Co-chaperonin GroES from Listeria monocytogenes serotype 4b (strain CLIP80459).